A 217-amino-acid polypeptide reads, in one-letter code: Probable transaldolase (217 aa).

Lys84 (schiff-base intermediate with substrate) is an active-site residue.

It belongs to the transaldolase family. Type 3B subfamily.

It localises to the cytoplasm. It carries out the reaction D-sedoheptulose 7-phosphate + D-glyceraldehyde 3-phosphate = D-erythrose 4-phosphate + beta-D-fructose 6-phosphate. Its pathway is carbohydrate degradation; pentose phosphate pathway; D-glyceraldehyde 3-phosphate and beta-D-fructose 6-phosphate from D-ribose 5-phosphate and D-xylulose 5-phosphate (non-oxidative stage): step 2/3. In terms of biological role, transaldolase is important for the balance of metabolites in the pentose-phosphate pathway. The chain is Probable transaldolase from Roseiflexus sp. (strain RS-1).